The chain runs to 124 residues: uncharacterized protein (124 aa).

Functionally, this protein may be involved in virus assembly. This is an uncharacterized protein from Sulfolobus spindle-shape virus 1 (SSV1).